The chain runs to 407 residues: Probable tRNA pseudouridine synthase D (407 aa).

The Nucleophile role is filled by Asp-81. Positions 151–372 (GFPNYFGIQR…PGGRRELLIR (222 aa)) constitute a TRUD domain.

The protein belongs to the pseudouridine synthase TruD family.

It carries out the reaction uridine(13) in tRNA = pseudouridine(13) in tRNA. In terms of biological role, could be responsible for synthesis of pseudouridine from uracil-13 in transfer RNAs. This is Probable tRNA pseudouridine synthase D from Pyrococcus furiosus (strain ATCC 43587 / DSM 3638 / JCM 8422 / Vc1).